The sequence spans 214 residues: Putative 3-methyladenine DNA glycosylase (214 aa).

This sequence belongs to the DNA glycosylase MPG family.

This Gloeobacter violaceus (strain ATCC 29082 / PCC 7421) protein is Putative 3-methyladenine DNA glycosylase.